A 141-amino-acid chain; its full sequence is Hemoglobin subunit alpha-D (141 aa).

Positions 1-141 constitute a Globin domain; the sequence is MLSADEKQLI…VSDVLAEKYR (141 aa). 2 residues coordinate heme b: His58 and His87.

This sequence belongs to the globin family. Heterotetramer of two alpha-D chains and two beta chains. As to expression, red blood cells.

In terms of biological role, involved in oxygen transport from the lung to the various peripheral tissues. This chain is Hemoglobin subunit alpha-D (HBAD), found in Phrynops hilarii (Snake-necked turtle).